The primary structure comprises 290 residues: Pirin (290 aa).

Fe cation-binding residues include His56, His58, His101, and Glu103.

It belongs to the pirin family. As to quaternary structure, may interact with NF1/CTF1. Interacts with BCL3. Identified in a complex comprised of PIR, BLC3, NFKB1 and target DNA. Fe cation serves as cofactor. As to expression, weakly expressed in bone marrow.

The protein resides in the nucleus. It is found in the cytoplasm. It carries out the reaction quercetin + O2 = 2-(3,4-dihydroxybenzoyloxy)-4,6-dihydroxybenzoate + CO. Its pathway is flavonoid metabolism; quercetin degradation. Its function is as follows. Transcriptional coregulator of NF-kappa-B which facilitates binding of NF-kappa-B proteins to target kappa-B genes in a redox-state-dependent manner. May be required for efficient terminal myeloid maturation of hematopoietic cells. Has quercetin 2,3-dioxygenase activity (in vitro). This chain is Pirin (Pir), found in Mus musculus (Mouse).